We begin with the raw amino-acid sequence, 948 residues long: 3-hydroxy-3-methylglutaryl-coenzyme A reductase (948 aa).

Helical transmembrane passes span 9–25, 55–71, 96–112, 124–140, 207–223, and 286–302; these read LLFFDCFSTGTFFVLLI, VIIFLVVFVYFIGVLTC, LILFTFALCSLSSVLFV, TSVFLLFSDLSVFFIVL, IIYIMIVFVFLPSFMRI, and CWSTTFVIFVSLIILHL. N316 carries N-linked (GlcNAc...) asparagine glycosylation. The helical transmembrane segment at 347 to 363 threads the bilayer; that stretch reads VINANLVVYLFLGLFLF. The linker stretch occupies residues 364 to 466; that stretch reads KRIRLNKPIN…MLTEKIKQGL (103 aa). The N-linked (GlcNAc...) asparagine glycan is linked to N430. A catalytic region spans residues 467 to 948; it reads GHELSDTEIL…VNPEISHYTM (482 aa). Catalysis depends on charge relay system residues E567, K699, and D777. The active-site Proton donor is H869. N895 is a glycosylation site (N-linked (GlcNAc...) asparagine).

The protein belongs to the HMG-CoA reductase family.

It is found in the endoplasmic reticulum membrane. The protein localises to the peroxisome membrane. It catalyses the reaction (R)-mevalonate + 2 NADP(+) + CoA = (3S)-3-hydroxy-3-methylglutaryl-CoA + 2 NADPH + 2 H(+). It functions in the pathway metabolic intermediate biosynthesis; (R)-mevalonate biosynthesis; (R)-mevalonate from acetyl-CoA: step 3/3. In terms of biological role, this transmembrane glycoprotein is involved in the control of cholesterol and nonsterol isoprenoid compounds biosynthesis. It is the rate-limiting enzyme of sterol biosynthesis. This chain is 3-hydroxy-3-methylglutaryl-coenzyme A reductase, found in Schistosoma mansoni (Blood fluke).